Consider the following 441-residue polypeptide: Polycomb protein EED (441 aa).

A disordered region spans residues Met-1–Lys-72. Position 2 is an N-acetylserine (Ser-2). Phosphoserine is present on residues Ser-2 and Ser-34. Residues Glu-45–Asn-61 show a composition bias toward polar residues. Thr-55 is modified (phosphothreonine). Lys-66 bears the N6,N6,N6-trimethyllysine; alternate mark. Lys-66 carries the post-translational modification N6,N6-dimethyllysine; alternate. At Lys-66 the chain carries N6-methyllysine; alternate. The segment at Ser-81–Arg-441 is interaction with EZH2. 4 WD repeats span residues Asp-91–Leu-134, Asp-142–His-185, Gly-188–Ile-228, and Gly-234–Lys-275. Required for interaction with the matrix protein MA of HIV-1 regions lie at residues Thr-149 to Asp-303 and Thr-301 to Arg-441. N6,N6,N6-trimethyllysine; alternate occurs at positions 197, 268, and 284. N6,N6-dimethyllysine; alternate occurs at positions 197, 268, and 284. N6-methyllysine; alternate occurs at positions 197, 268, and 284. WD repeat units lie at residues Ile-304–Asp-341, Ser-359–Ala-399, and Lys-408–Arg-441.

It belongs to the WD repeat ESC family. In terms of assembly, component of the PRC2/EED-EZH2 complex, which includes EED, EZH2, SUZ12, RBBP4 and RBBP7 and possibly AEBP2. The minimum components required for methyltransferase activity of the PRC2/EED-EZH2 complex are EED, EZH2 and SUZ12. Component of the PRC2/EED-EZH1 complex, which includes EED, EZH1, SUZ12, RBBP4 and AEBP2. The PRC2 complex may also interact with DNMT1, DNMT3A, DNMT3B and PHF1 via the EZH2 subunit and with SIRT1 via the SUZ12 subunit. Interacts with HDAC, HDAC2, histone H1 and YY1. May interact with ITGA4, ITGAE and ITGB7. Interacts with CDYL. Interacts with BMAL1. Interacts with KMT2A/MLL1. As to quaternary structure, (Microbial infection) May interact with the MA protein of HIV-1. Methylated. Binding to histone H1 'Lys-26' promotes mono-, di-, and trimethylation of internal lysines. As to expression, expressed in brain, colon, heart, kidney, liver, lung, muscle, ovary, peripheral blood leukocytes, pancreas, placenta, prostate, spleen, small intestine, testis, thymus and uterus. Appears to be overexpressed in breast and colon cancer.

It is found in the nucleus. The protein resides in the chromosome. In terms of biological role, polycomb group (PcG) protein. Component of the PRC2/EED-EZH2 complex, which methylates 'Lys-9' and 'Lys-27' of histone H3, leading to transcriptional repression of the affected target gene. Also recognizes 'Lys-26' trimethylated histone H1 with the effect of inhibiting PRC2 complex methyltransferase activity on nucleosomal histone H3 'Lys-27', whereas H3 'Lys-27' recognition has the opposite effect, enabling the propagation of this repressive mark. The PRC2/EED-EZH2 complex may also serve as a recruiting platform for DNA methyltransferases, thereby linking two epigenetic repression systems. Genes repressed by the PRC2/EED-EZH2 complex include HOXC8, HOXA9, MYT1 and CDKN2A. In Homo sapiens (Human), this protein is Polycomb protein EED.